Consider the following 250-residue polypeptide: DNA polymerase sliding clamp (250 aa).

This sequence belongs to the PCNA family. As to quaternary structure, homotrimer. The subunits circularize to form a toroid; DNA passes through its center. Replication factor C (RFC) is required to load the toroid on the DNA.

Functionally, sliding clamp subunit that acts as a moving platform for DNA processing. Responsible for tethering the catalytic subunit of DNA polymerase and other proteins to DNA during high-speed replication. This chain is DNA polymerase sliding clamp, found in Methanococcus maripaludis (strain C6 / ATCC BAA-1332).